Here is a 107-residue protein sequence, read N- to C-terminus: U1-lycotoxin-Ls1b (107 aa).

The first 20 residues, 1–20 (MMKVLVVVALLATLISYSSS), serve as a signal peptide directing secretion. A propeptide spanning residues 21-41 (EGIDDLEADELLSLMANEQTR) is cleaved from the precursor. 4 cysteine pairs are disulfide-bonded: Cys-44–Cys-59, Cys-51–Cys-68, Cys-58–Cys-86, and Cys-70–Cys-84.

The protein belongs to the neurotoxin 19 (CSTX) family. 04 (U1-Lctx) subfamily. As to expression, expressed by the venom gland.

Its subcellular location is the secreted. This is U1-lycotoxin-Ls1b from Lycosa singoriensis (Wolf spider).